The chain runs to 389 residues: Zip homologous protein 3 (389 aa).

Residues 6 to 43 form an RING-type zinc finger; it reads CNKCFNRKPPDGFFISSCFHIFCTKCAKADLAVCLICK. Residues 123-164 are a coiled coil; the sequence is LAEATAWIQMAEKKLQASEEERVKAEREIEECQAKLKSMTNL. The disordered stretch occupies residues 366–389; sequence ISSQPGYLAQRKPINGRSFIGPAD.

As to quaternary structure, interacts with zhp-4; the interaction is required for their localization along paired chromosomes and stability, and for the formation of chiasma during meiotic recombination. As to expression, expressed througout the gonad (at protein level). Expressed in the germline.

Its subcellular location is the chromosome. In terms of biological role, recruited co-dependently with zhp-4 to the synaptonemal complex between homologous chromosome pairs to regulate the formation and number of crossover events between homologs during meiotic recombination. In the early stages of pachytene, in complex with zhp-4, recruited by the zhp-1-zhp-2 heterodimer to designated crossover sites along the homolog pair to stabilize other pro-crossover factors such as rmh-1, msh-5 and cosa-1. This in turn facilitates crossover and promotes the formation of chiasma in each meiotic nucleus at the late pachytene stage of meiosis. Plays a role in the segregation of homologous chromosomes following the completion of crossovers. Together with him-14 and msh-5 plays a role in the activation of DNA damage-dependent apoptosis at the DNA damage checkpoint in pachytene cells. In Caenorhabditis elegans, this protein is Zip homologous protein 3.